We begin with the raw amino-acid sequence, 705 residues long: MDRRGAPVKQDSAKVEQRMEELRTLLEYHGHRYYVMDEPEISDAEYDALFRELVRLEEEHPEHIHPGSPTHKVGGQILDGLKPREHSLRMYSLDNAFGIEEFREFVERVVRLEPDAPLEFWVDPKMDGLAMELVYENGVFLLAVTRGDGSMGEDVTHTMRTVRNVRMRLNPEIEAPVRLEVRGEVIITRADFEALNARQQQKGGKLFANPRNAAAGSVRQLDSSVAAARPLRFMAYGVGQVVWADGRQRWRTQYDIMRGLQELGFAVPSQGRLCAAPADVEAAFTELSAARHELPFEIDGVVAKLNDLDLQEALGFTARAPRWAIALKFPAHQARTRLKDIRIQVGRTGVMTPVAELEPVTVGGVTVSSATLHNEDEIRAKGLMLGDVVIVQRAGDVIPEVVRAVPEERTGAEREYVFPAVCPVCGSAAVRGEGEAAWRCTNMQCPAVRKQAIIHFVSKAGLDIDGVGRKWIEQLVDSGRVVSPADLFRITREDLLGMERMGEKLASNFIEAFDSARHESTLQRFICALGIRHVGEQTARTLAARFGNMDELMRADQETLQSLRDIGGEVAGSIRAFFANGQNRELLQQFKNLGLWPEEQQPAGDSTPVTPLAGKKILFTGSLVRMTRSEAKAMAEKAGAAVMSGVSARLDILVAGDKPGSKLEKARSLGITVLTEDEFIRQASESEEISGQAADDYENSLLRVQ.

Residues 43–47 (DAEYD), 92–93 (SL), and aspartate 123 contribute to the NAD(+) site. Lysine 125 serves as the catalytic N6-AMP-lysine intermediate. NAD(+) contacts are provided by arginine 146, glutamate 184, lysine 304, and lysine 328. The Zn(2+) site is built by cysteine 422, cysteine 425, cysteine 440, and cysteine 445. Residues 607-696 (TPVTPLAGKK…EEISGQAADD (90 aa)) enclose the BRCT domain. A disordered region spans residues 684–705 (SESEEISGQAADDYENSLLRVQ).

It belongs to the NAD-dependent DNA ligase family. LigA subfamily. The cofactor is Mg(2+). Mn(2+) is required as a cofactor.

It catalyses the reaction NAD(+) + (deoxyribonucleotide)n-3'-hydroxyl + 5'-phospho-(deoxyribonucleotide)m = (deoxyribonucleotide)n+m + AMP + beta-nicotinamide D-nucleotide.. Functionally, DNA ligase that catalyzes the formation of phosphodiester linkages between 5'-phosphoryl and 3'-hydroxyl groups in double-stranded DNA using NAD as a coenzyme and as the energy source for the reaction. It is essential for DNA replication and repair of damaged DNA. The chain is DNA ligase from Oleidesulfovibrio alaskensis (strain ATCC BAA-1058 / DSM 17464 / G20) (Desulfovibrio alaskensis).